The sequence spans 211 residues: Riboflavin transporter RibU (211 aa).

The next 5 helical transmembrane spans lie at 34–54 (AYIA…FPLI), 66–86 (ILPV…GVLL), 104–124 (IGLP…SYFW), 134–154 (ILGS…LNYI), and 180–200 (AMVV…FALI).

The protein belongs to the prokaryotic riboflavin transporter (P-RFT) (TC 2.A.87) family. In terms of assembly, forms a stable energy-coupling factor (ECF) transporter complex composed of 2 membrane-embedded substrate-binding proteins (S component), 2 ATP-binding proteins (A component) and 2 transmembrane proteins (T component) upon coexpression of the 4 components in E.coli.

Its subcellular location is the cell membrane. Substrate-binding (S) component of an energy-coupling factor (ECF) ABC-transporter complex. Mediates riboflavin uptake, may also transport FMN and roseoflavin. Probably a riboflavin-binding protein that interacts with the energy-coupling factor (ECF) ABC-transporter complex. Unlike classic ABC transporters this ECF transporter provides the energy necessary to transport a number of different substrates. The substrates themselves are bound by transmembrane, not extracytoplasmic soluble proteins. Expression of the complex plus RibU in E.coli allows riboflavin uptake. This is Riboflavin transporter RibU (ribU) from Streptococcus thermophilus (strain ATCC BAA-250 / LMG 18311).